A 460-amino-acid chain; its full sequence is uncharacterized protein (460 aa).

The TRAM domain occupies 8 to 66; it reads PVEKNEFIDVVFEDLTHDGAGVAKVKGYPIFVKNGLPGEEAQIKIIKVKKNFAFGRLMK. 4 residues coordinate [4Fe-4S] cluster: cysteine 79, cysteine 85, cysteine 88, and cysteine 166. Glutamine 290, tyrosine 319, glutamate 340, and aspartate 388 together coordinate S-adenosyl-L-methionine. Cysteine 415 (nucleophile) is an active-site residue.

It belongs to the class I-like SAM-binding methyltransferase superfamily. RNA M5U methyltransferase family.

This is an uncharacterized protein from Bacillus cereus (strain ATCC 10987 / NRS 248).